Reading from the N-terminus, the 453-residue chain is Bifunctional protein GlmU (453 aa).

The interval methionine 1–lysine 225 is pyrophosphorylase. UDP-N-acetyl-alpha-D-glucosamine-binding positions include leucine 6–glycine 9, lysine 20, glutamine 71, glycine 76–threonine 77, tyrosine 98–aspartate 100, glycine 135, glutamate 150, asparagine 165, and asparagine 223. Position 100 (aspartate 100) interacts with Mg(2+). Asparagine 223 is a Mg(2+) binding site. The segment at alanine 226–aspartate 246 is linker. An N-acetyltransferase region spans residues glycine 247 to serine 453. UDP-N-acetyl-alpha-D-glucosamine contacts are provided by arginine 329 and lysine 347. Histidine 359 functions as the Proton acceptor in the catalytic mechanism. Tyrosine 362 and asparagine 373 together coordinate UDP-N-acetyl-alpha-D-glucosamine. Acetyl-CoA contacts are provided by residues alanine 376, asparagine 382–tyrosine 383, serine 401, and alanine 419.

It in the N-terminal section; belongs to the N-acetylglucosamine-1-phosphate uridyltransferase family. The protein in the C-terminal section; belongs to the transferase hexapeptide repeat family. As to quaternary structure, homotrimer. It depends on Mg(2+) as a cofactor.

The protein resides in the cytoplasm. The enzyme catalyses alpha-D-glucosamine 1-phosphate + acetyl-CoA = N-acetyl-alpha-D-glucosamine 1-phosphate + CoA + H(+). It carries out the reaction N-acetyl-alpha-D-glucosamine 1-phosphate + UTP + H(+) = UDP-N-acetyl-alpha-D-glucosamine + diphosphate. Its pathway is nucleotide-sugar biosynthesis; UDP-N-acetyl-alpha-D-glucosamine biosynthesis; N-acetyl-alpha-D-glucosamine 1-phosphate from alpha-D-glucosamine 6-phosphate (route II): step 2/2. It participates in nucleotide-sugar biosynthesis; UDP-N-acetyl-alpha-D-glucosamine biosynthesis; UDP-N-acetyl-alpha-D-glucosamine from N-acetyl-alpha-D-glucosamine 1-phosphate: step 1/1. The protein operates within bacterial outer membrane biogenesis; LPS lipid A biosynthesis. In terms of biological role, catalyzes the last two sequential reactions in the de novo biosynthetic pathway for UDP-N-acetylglucosamine (UDP-GlcNAc). The C-terminal domain catalyzes the transfer of acetyl group from acetyl coenzyme A to glucosamine-1-phosphate (GlcN-1-P) to produce N-acetylglucosamine-1-phosphate (GlcNAc-1-P), which is converted into UDP-GlcNAc by the transfer of uridine 5-monophosphate (from uridine 5-triphosphate), a reaction catalyzed by the N-terminal domain. This chain is Bifunctional protein GlmU, found in Burkholderia multivorans (strain ATCC 17616 / 249).